Reading from the N-terminus, the 132-residue chain is Transcription antitermination protein NusB (132 aa).

This sequence belongs to the NusB family.

In terms of biological role, involved in transcription antitermination. Required for transcription of ribosomal RNA (rRNA) genes. Binds specifically to the boxA antiterminator sequence of the ribosomal RNA (rrn) operons. The polypeptide is Transcription antitermination protein NusB (Lachnoclostridium phytofermentans (strain ATCC 700394 / DSM 18823 / ISDg) (Clostridium phytofermentans)).